The following is a 580-amino-acid chain: Protein O-linked-mannose beta-1,4-N-acetylglucosaminyltransferase 2 (580 aa).

The Cytoplasmic segment spans residues Met1–Ser4. A helical; Signal-anchor for type II membrane protein transmembrane segment spans residues Ala5–Leu25. Over Arg26–Thr580 the chain is Lumenal. N-linked (GlcNAc...) asparagine glycosylation is found at Asn99 and Asn276. Residues Ala488–Thr580 enclose the Fibronectin type-III domain.

It belongs to the glycosyltransferase 61 family.

Its subcellular location is the endoplasmic reticulum membrane. It carries out the reaction 3-O-(alpha-D-mannosyl)-L-threonyl-[protein] + UDP-N-acetyl-alpha-D-glucosamine = 3-O-(N-acetyl-beta-D-glucosaminyl-(1-&gt;4)-alpha-D-mannosyl)-L-threonyl-[protein] + UDP + H(+). It participates in protein modification; protein glycosylation. Functionally, O-linked mannose beta-1,4-N-acetylglucosaminyltransferase that transfers UDP-N-acetyl-D-glucosamine to the 4-position of the mannose to generate N-acetyl-D-glucosamine-beta-1,4-O-D-mannosylprotein. Involved in the biosynthesis of the phosphorylated O-mannosyl trisaccharide (N-acetylgalactosamine-beta-3-N-acetylglucosamine-beta-4-(phosphate-6-)mannose), a carbohydrate structure present in alpha-dystroglycan (DAG1), which is required for binding laminin G-like domain-containing extracellular proteins with high affinity. The protein is Protein O-linked-mannose beta-1,4-N-acetylglucosaminyltransferase 2 (POMGNT2) of Canis lupus familiaris (Dog).